We begin with the raw amino-acid sequence, 227 residues long: MAHKRLFVYAVLLVICYLVGVTWAETAAQTFPAIGTNSNNNSNAQPAPVPAPAAPAAAAPLAKQVSAPTAAPPAKVIGQPVLAAPGKNSSNSSSTTECVCAGALLPRLDANGKELPICAECKCSHVARNTTLIKVVVIIVIWIISILVIYMLFLMCLDPLLNKRVKANYQEHTNEDDEPTPPLPAVNNQELSARANVLNRVGHQQDKWKRQVREQRRHIYDRHTMLN.

2 helical membrane passes run 7–24 (FVYA…VTWA) and 135–157 (VVVI…LMCL).

It belongs to the TMEM9 family.

The protein localises to the membrane. This is an uncharacterized protein from Drosophila melanogaster (Fruit fly).